The following is a 108-amino-acid chain: Evasin P1127 (108 aa).

The N-terminal stretch at 1 to 28 (MEAKTFAFLEIAMFIALGIQTFVAVTDA) is a signal peptide. Cystine bridges form between Cys41-Cys63, Cys45-Cys65, and Cys56-Cys76. N-linked (GlcNAc...) asparagine glycosylation is present at Asn44. Asn89 is a glycosylation site (N-linked (GlcNAc...) asparagine).

The protein localises to the secreted. In terms of biological role, salivary chemokine-binding protein which binds to host chemokines CXCL1, CXCL2, CXCL3, CXCL5 and CXCL8. This Ixodes ricinus (Common tick) protein is Evasin P1127.